The following is a 347-amino-acid chain: Ketol-acid reductoisomerase (NADP(+)) (347 aa).

The region spanning 1 to 185 (MKIYYDEDAN…GGTRAGVLET (185 aa)) is the KARI N-terminal Rossmann domain. NADP(+) is bound by residues 24–27 (YGSQ), Arg-47, Ser-50, Ser-52, and 82–85 (DEFQ). His-107 is a catalytic residue. Gly-133 is a binding site for NADP(+). The KARI C-terminal knotted domain maps to 186–336 (SFKEETETDL…AELRSKMKFL (151 aa)). Positions 194, 198, 230, and 234 each coordinate Mg(2+). Substrate is bound at residue Ser-255.

Belongs to the ketol-acid reductoisomerase family. The cofactor is Mg(2+).

The enzyme catalyses (2R)-2,3-dihydroxy-3-methylbutanoate + NADP(+) = (2S)-2-acetolactate + NADPH + H(+). It carries out the reaction (2R,3R)-2,3-dihydroxy-3-methylpentanoate + NADP(+) = (S)-2-ethyl-2-hydroxy-3-oxobutanoate + NADPH + H(+). The protein operates within amino-acid biosynthesis; L-isoleucine biosynthesis; L-isoleucine from 2-oxobutanoate: step 2/4. Its pathway is amino-acid biosynthesis; L-valine biosynthesis; L-valine from pyruvate: step 2/4. Its function is as follows. Involved in the biosynthesis of branched-chain amino acids (BCAA). Catalyzes an alkyl-migration followed by a ketol-acid reduction of (S)-2-acetolactate (S2AL) to yield (R)-2,3-dihydroxy-isovalerate. In the isomerase reaction, S2AL is rearranged via a Mg-dependent methyl migration to produce 3-hydroxy-3-methyl-2-ketobutyrate (HMKB). In the reductase reaction, this 2-ketoacid undergoes a metal-dependent reduction by NADPH to yield (R)-2,3-dihydroxy-isovalerate. In Gamma-proteobacterium EBAC31A08, this protein is Ketol-acid reductoisomerase (NADP(+)).